Consider the following 189-residue polypeptide: Peptidyl-tRNA hydrolase (189 aa).

Phe-15 lines the tRNA pocket. The Proton acceptor role is filled by His-20. The tRNA site is built by Tyr-65, Asn-67, and Asn-113.

The protein belongs to the PTH family. In terms of assembly, monomer.

It is found in the cytoplasm. It catalyses the reaction an N-acyl-L-alpha-aminoacyl-tRNA + H2O = an N-acyl-L-amino acid + a tRNA + H(+). In terms of biological role, hydrolyzes ribosome-free peptidyl-tRNAs (with 1 or more amino acids incorporated), which drop off the ribosome during protein synthesis, or as a result of ribosome stalling. Its function is as follows. Catalyzes the release of premature peptidyl moieties from peptidyl-tRNA molecules trapped in stalled 50S ribosomal subunits, and thus maintains levels of free tRNAs and 50S ribosomes. This is Peptidyl-tRNA hydrolase from Phytoplasma australiense.